The sequence spans 120 residues: Holo-[acyl-carrier-protein] synthase (120 aa).

Positions 8 and 60 each coordinate Mg(2+).

It belongs to the P-Pant transferase superfamily. AcpS family. The cofactor is Mg(2+).

It localises to the cytoplasm. The enzyme catalyses apo-[ACP] + CoA = holo-[ACP] + adenosine 3',5'-bisphosphate + H(+). In terms of biological role, transfers the 4'-phosphopantetheine moiety from coenzyme A to a Ser of acyl-carrier-protein. The polypeptide is Holo-[acyl-carrier-protein] synthase (Anaplasma marginale (strain St. Maries)).